The primary structure comprises 551 residues: MEPDTTRRSACDRCRGQKLRCVRLPGPAREDSPRSARSVNQPCERCKRAKVVCYTTKPVSRRLPQSYTRRRSTAYADDVMHSEVDLDEGMIGSNRLRDEPTIKRTPPAIADRLAHDPFPTELWSGLDISHASLDSSAVLSHVPDPGNMVESVAAQRANSNTLPSHQHGWPEDPHGALNYFEERAHDLPDVMSVSSPTDVRLGLDTVDRRPAAATSRTNQAIHSDTVNMHSQAPGSGETSERGLYSRASNTVADAAQLCTTQLSELNMRLMKDIESTTSFRQGMSAASDPNYPASGLGETSPSSSMVKFTNTMLANCQSFLDILQRLRSPTVELRGSSNSECSYGDLEYSSNEYSSSRSQSRNHSTSASSRSKDGRISAGGGLQSVLNSDTIGLSPSLDPIKADSSALDFSAFLSILSCYTHILRAYDALFTEILEMLMESSCIQLDLKIHNLVPEVSLGGFRLSGHGDLQIKCLLHMSFIILEKIESMLGVNAPEKDPYGSNGGLLNNSQLRGLLEALYHQKEFDYIRADGTRAARVKKTMKSIQRILDSI.

The zn(2)-C6 fungal-type DNA-binding region spans 11 to 53 (CDRCRGQKLRCVRLPGPAREDSPRSARSVNQPCERCKRAKVVC). Disordered regions lie at residues 280–302 (RQGMSAASDPNYPASGLGETSPS) and 351–378 (NEYSSSRSQSRNHSTSASSRSKDGRISA). A compositionally biased stretch (low complexity) spans 351-369 (NEYSSSRSQSRNHSTSASS).

Its subcellular location is the nucleus. Its function is as follows. C6 finger transcription factor that positively regulates the cluster that mediates the biosynthesis of imizoquins A to D, tripeptide-derived alkaloids that serve a protective role against oxidative stress that are essential for normal germination. This chain is C6 finger transcription factor imqK, found in Aspergillus flavus (strain ATCC 200026 / FGSC A1120 / IAM 13836 / NRRL 3357 / JCM 12722 / SRRC 167).